A 327-amino-acid polypeptide reads, in one-letter code: DNA-directed RNA polymerase subunit alpha (327 aa).

An alpha N-terminal domain (alpha-NTD) region spans residues 1-233; sequence MQNVLKSFLT…HQLAAFVDLK (233 aa). The segment at 247–327 is alpha C-terminal domain (alpha-CTD); that stretch reads VNPLLLRPVE…GWPPADLTDQ (81 aa).

The protein belongs to the RNA polymerase alpha chain family. In terms of assembly, homodimer. The RNAP catalytic core consists of 2 alpha, 1 beta, 1 beta' and 1 omega subunit. When a sigma factor is associated with the core the holoenzyme is formed, which can initiate transcription.

The enzyme catalyses RNA(n) + a ribonucleoside 5'-triphosphate = RNA(n+1) + diphosphate. DNA-dependent RNA polymerase catalyzes the transcription of DNA into RNA using the four ribonucleoside triphosphates as substrates. This is DNA-directed RNA polymerase subunit alpha from Coxiella burnetii (strain CbuK_Q154) (Coxiella burnetii (strain Q154)).